The sequence spans 298 residues: Tyrosine recombinase XerD (298 aa).

Residues 3–88 (TLEHPLIDRF…GLRGFYRYCL (86 aa)) enclose the Core-binding (CB) domain. The region spanning 109–292 (PLPKSLSEAD…ARARLQDLHA (184 aa)) is the Tyr recombinase domain. Residues R149, K173, H244, R247, and H270 contribute to the active site. Residue Y279 is the O-(3'-phospho-DNA)-tyrosine intermediate of the active site.

The protein belongs to the 'phage' integrase family. XerD subfamily. In terms of assembly, forms a cyclic heterotetrameric complex composed of two molecules of XerC and two molecules of XerD.

It is found in the cytoplasm. Its function is as follows. Site-specific tyrosine recombinase, which acts by catalyzing the cutting and rejoining of the recombining DNA molecules. The XerC-XerD complex is essential to convert dimers of the bacterial chromosome into monomers to permit their segregation at cell division. It also contributes to the segregational stability of plasmids. The protein is Tyrosine recombinase XerD of Pseudomonas aeruginosa (strain ATCC 15692 / DSM 22644 / CIP 104116 / JCM 14847 / LMG 12228 / 1C / PRS 101 / PAO1).